Consider the following 460-residue polypeptide: ATP synthase subunit beta 1 (460 aa).

Residue 149–156 coordinates ATP; that stretch reads GGAGVGKT.

It belongs to the ATPase alpha/beta chains family. As to quaternary structure, F-type ATPases have 2 components, CF(1) - the catalytic core - and CF(0) - the membrane proton channel. CF(1) has five subunits: alpha(3), beta(3), gamma(1), delta(1), epsilon(1). CF(0) has three main subunits: a(1), b(2) and c(9-12). The alpha and beta chains form an alternating ring which encloses part of the gamma chain. CF(1) is attached to CF(0) by a central stalk formed by the gamma and epsilon chains, while a peripheral stalk is formed by the delta and b chains.

The protein localises to the cell inner membrane. The catalysed reaction is ATP + H2O + 4 H(+)(in) = ADP + phosphate + 5 H(+)(out). In terms of biological role, produces ATP from ADP in the presence of a proton gradient across the membrane. The catalytic sites are hosted primarily by the beta subunits. This Nitrosomonas eutropha (strain DSM 101675 / C91 / Nm57) protein is ATP synthase subunit beta 1.